Here is a 773-residue protein sequence, read N- to C-terminus: Beta-hexosaminidase B (773 aa).

An N-terminal signal peptide occupies residues 1 to 19 (MKFNRLMALLFGVSSPLYA). 3 cysteine pairs are disulfide-bonded: cysteine 46–cysteine 53, cysteine 389–cysteine 397, and cysteine 496–cysteine 542. Glutamate 531 acts as the Proton donor in catalysis.

This sequence belongs to the glycosyl hydrolase 20 family.

The catalysed reaction is Hydrolysis of terminal non-reducing N-acetyl-D-hexosamine residues in N-acetyl-beta-D-hexosaminides.. The polypeptide is Beta-hexosaminidase B (nag096) (Pseudoalteromonas piscicida).